Here is a 303-residue protein sequence, read N- to C-terminus: UDP-3-O-acyl-N-acetylglucosamine deacetylase (303 aa).

Zn(2+) is bound by residues His-78, His-237, and Asp-241. His-264 (proton donor) is an active-site residue.

The protein belongs to the LpxC family. Zn(2+) is required as a cofactor.

It catalyses the reaction a UDP-3-O-[(3R)-3-hydroxyacyl]-N-acetyl-alpha-D-glucosamine + H2O = a UDP-3-O-[(3R)-3-hydroxyacyl]-alpha-D-glucosamine + acetate. The protein operates within glycolipid biosynthesis; lipid IV(A) biosynthesis; lipid IV(A) from (3R)-3-hydroxytetradecanoyl-[acyl-carrier-protein] and UDP-N-acetyl-alpha-D-glucosamine: step 2/6. Functionally, catalyzes the hydrolysis of UDP-3-O-myristoyl-N-acetylglucosamine to form UDP-3-O-myristoylglucosamine and acetate, the committed step in lipid A biosynthesis. This Azotobacter vinelandii (strain DJ / ATCC BAA-1303) protein is UDP-3-O-acyl-N-acetylglucosamine deacetylase.